A 290-amino-acid polypeptide reads, in one-letter code: Thioredoxin-like protein 1 (290 aa).

A Thioredoxin domain is found at 24 to 104 (VDCYADWCGP…PQALKEKVAL (81 aa)). Cysteine 31 and cysteine 34 are disulfide-bonded. The PITH domain maps to 118–290 (SSSAPVKGFA…SKGKLQKVEA (173 aa)).

It is found in the cytoplasm. Its subcellular location is the nucleus. Has a role in cellular detoxification of alkyl hydroperoxide. In Schizosaccharomyces pombe (strain 972 / ATCC 24843) (Fission yeast), this protein is Thioredoxin-like protein 1 (txl1).